The chain runs to 68 residues: Large ribosomal subunit protein uL29 (68 aa).

Belongs to the universal ribosomal protein uL29 family.

This Limosilactobacillus fermentum (strain NBRC 3956 / LMG 18251) (Lactobacillus fermentum) protein is Large ribosomal subunit protein uL29.